Consider the following 463-residue polypeptide: L-seryl-tRNA(Sec) selenium transferase (463 aa).

Lysine 295 carries the N6-(pyridoxal phosphate)lysine modification.

Belongs to the SelA family. As to quaternary structure, homodecamer; pentamer of dimers. Binds only one seryl-tRNA(Sec) per dimer. Pyridoxal 5'-phosphate serves as cofactor.

It localises to the cytoplasm. The catalysed reaction is L-seryl-tRNA(Sec) + selenophosphate + H(+) = L-selenocysteinyl-tRNA(Sec) + phosphate. The protein operates within aminoacyl-tRNA biosynthesis; selenocysteinyl-tRNA(Sec) biosynthesis; selenocysteinyl-tRNA(Sec) from L-seryl-tRNA(Sec) (bacterial route): step 1/1. Its function is as follows. Converts seryl-tRNA(Sec) to selenocysteinyl-tRNA(Sec) required for selenoprotein biosynthesis. The polypeptide is L-seryl-tRNA(Sec) selenium transferase (Escherichia coli O6:H1 (strain CFT073 / ATCC 700928 / UPEC)).